The primary structure comprises 190 residues: MKYAIVYSSRTGNTRQLAEKAFEVLGEREGGECVYFGEVPAGPLEGATAQRFREAEILYAGFWTDKGNADSGILSLFKELGKTDNMPPEIILFGTAGFGADQAYYDRIIQAAACELPESVKLKASFMCQGKMQQGVLERYRSMLEANPQDGRAKLMVDNYHAALTHPDGTDMAAFQHFLISSVPAAGMGE.

It participates in porphyrin-containing compound metabolism; protoheme degradation. Functionally, together with BilR, catalyzes reduction of mesobilirubin and/or bilirubin to urobilinogen, a key step during heme degradation. BilS is probably involved in electron transfer for the bilirubin reductase BilR. The polypeptide is Flavodoxin-like domain-containing protein BilS (Clostridium symbiosum (strain WAL-14163)).